The following is a 1109-amino-acid chain: Coiled-coil domain-containing protein 158 (1109 aa).

A compositionally biased stretch (basic and acidic residues) spans 1–12 (MESKACESKNED). A disordered region spans residues 1–31 (MESKACESKNEDLLPSGITSKGGSSSPFFVT). A compositionally biased stretch (polar residues) spans 17–31 (GITSKGGSSSPFFVT). Coiled coils occupy residues 71–166 (GKEH…MLKD) and 242–828 (VEDQ…QEQE). Disordered stretches follow at residues 843-897 (LQGP…DPTR) and 952-1061 (HRSN…TGKT). 3 stretches are compositionally biased toward polar residues: residues 862–882 (ASVT…SFLS), 953–970 (RSNN…SSET), and 988–998 (SCFTFTSTASP). The span at 999 to 1019 (SGKMSASRSFSSSPKKSPVHS) shows a compositional bias: low complexity. Polar residues-rich tracts occupy residues 1020-1037 (LLTS…QYRS) and 1043-1061 (SPTS…TGKT). Positions 1053–1109 (PSLETTGKTCQKLQNRLESLQTLVEDLQLKNQAMSSMIRNQEKRIQKVKDQEKMLLK) form a coiled coil.

The chain is Coiled-coil domain-containing protein 158 (Ccdc158) from Mus musculus (Mouse).